We begin with the raw amino-acid sequence, 559 residues long: (-)-drimenol synthase (559 aa).

Residues D311, D315, D456, S460, and E464 each coordinate Mg(2+). The short motif at 311-315 (DDIYD) is the DDXXD motif element.

This sequence belongs to the terpene synthase family. It depends on Mg(2+) as a cofactor.

It carries out the reaction (2E,6E)-farnesyl diphosphate + H2O = (5S,9S,10S)-drim-7-en-11-ol + diphosphate. It functions in the pathway secondary metabolite biosynthesis; terpenoid biosynthesis. Its function is as follows. Catalyzes the conversion of (2E,6E)-farnesyl diphosphate (FPP) into drimenol, a precursor of the sesquiterpenoid polygodial. Polygodial has been shown to be an antifeedant for a number of herbivorous insects. The polypeptide is (-)-drimenol synthase (Persicaria hydropiper (Marshpepper knotweed)).